The sequence spans 661 residues: Chermesin D/asnovolin J monooxidase nvfH (661 aa).

Asn-12 carries an N-linked (GlcNAc...) asparagine glycan. A helical transmembrane segment spans residues Val-89–Phe-111. FAD-binding positions include Thr-128–Trp-131, Asp-140–Val-141, and Tyr-146. NADP(+) is bound at residue Met-138–Asp-140. NADP(+) contacts are provided by residues Thr-286–Gln-292 and Arg-309–Thr-310. Asn-382 and Asn-538 each carry an N-linked (GlcNAc...) asparagine glycan.

This sequence belongs to the FAD-binding monooxygenase family. FAD is required as a cofactor.

The protein localises to the membrane. The catalysed reaction is chermesin D + AH2 + O2 = asnovolin I + A + H2O. It carries out the reaction asnovolin J + AH2 + O2 = asnovolin A + A + H2O. The protein operates within secondary metabolite biosynthesis; terpenoid biosynthesis. Chermesin D/asnovolin J monooxidase; part of the gene cluster that mediates the biosynthesis of novofumigatonin, a heavily oxygenated meroterpenoid containing a unique orthoester moiety. The first step of the pathway is the synthesis of 3,5-dimethylorsellinic acid (DMOA) by the polyketide synthase nvfA via condensation of one acetyl-CoA starter unit with 3 malonyl-CoA units and 2 methylations. DMOA is then converted to farnesyl-DMOA by the farnesyltransferase nvfB. Epoxydation by FAD-dependent monooxygenase nvfK, followed by a protonation-initiated cyclization catalyzed by the terpene cyclase nvfL leads to the production of asnavolin H. The short chain dehydrogenase nvfC then as a 3-OH dehydrogenase of asnovolin H to yield chemesin D. There are two branches to synthesize asnovolin A from chemesin D. In one branch, chemesin D undergoes Baeyer-Villiger oxidation by nvfH, methylation by nvfJ, and enoyl reduction by the nvfM D enoylreductase that reduces the double bond between C-5'and C-6', to form respectively asnovolin I, asnovolin K, and asnovolin A. In the other branch, the methylation precedes the Baeyer-Villiger oxidation and the enoyl reduction to yield asnovolin A via the asnovolin J intermediate. Asnovolin A is further converted to fumigatonoid A by the Fe(II)/2-oxoglutarate-dependent dioxygenase nvfI that catalyzes an endoperoxidation reaction. The alpha/beta hydrolase nvfD then acts as an epimerase that converts fumigatonoid A to its C-5' epimer, which then undergoes spontaneous or nvfD-catalyzed lactonization. The following step utilizes the ketoreductase nvfG to produce fumigatonoid B. The dioxygenase nvfE further converts fumigatonoid B into fumigatonoid C. Finally the Fe(II)/2-oxoglutarate-dependent dioxygenase nvfF catalyzes two rounds of oxidation to transform fumigatonoid C into the end product, novofumigatonin A. This chain is Chermesin D/asnovolin J monooxidase nvfH, found in Aspergillus novofumigatus (strain IBT 16806).